We begin with the raw amino-acid sequence, 1146 residues long: DNA polymerase II large subunit (1146 aa).

It belongs to the archaeal DNA polymerase II family. In terms of assembly, heterodimer of a large subunit and a small subunit.

It carries out the reaction DNA(n) + a 2'-deoxyribonucleoside 5'-triphosphate = DNA(n+1) + diphosphate. The enzyme catalyses Exonucleolytic cleavage in the 3'- to 5'-direction to yield nucleoside 5'-phosphates.. Possesses two activities: a DNA synthesis (polymerase) and an exonucleolytic activity that degrades single-stranded DNA in the 3'- to 5'-direction. Has a template-primer preference which is characteristic of a replicative DNA polymerase. The protein is DNA polymerase II large subunit of Methanosarcina barkeri (strain Fusaro / DSM 804).